The sequence spans 137 residues: Small ribosomal subunit protein uS12 (137 aa).

The interval 1-55 is disordered; that stretch reads MPTINQLVRKPRKSKTKQSDSPALNRGFNSKKKQFTNLNSPQKRGVCTRVGTMTP. Asp-102 carries the 3-methylthioaspartic acid modification. The disordered stretch occupies residues 118–137; that stretch reads SGVDGRRQGRSLYGTKKPKN.

It belongs to the universal ribosomal protein uS12 family. As to quaternary structure, part of the 30S ribosomal subunit. Contacts proteins S8 and S17. May interact with IF1 in the 30S initiation complex.

In terms of biological role, with S4 and S5 plays an important role in translational accuracy. Functionally, interacts with and stabilizes bases of the 16S rRNA that are involved in tRNA selection in the A site and with the mRNA backbone. Located at the interface of the 30S and 50S subunits, it traverses the body of the 30S subunit contacting proteins on the other side and probably holding the rRNA structure together. The combined cluster of proteins S8, S12 and S17 appears to hold together the shoulder and platform of the 30S subunit. The chain is Small ribosomal subunit protein uS12 from Staphylococcus epidermidis (strain ATCC 35984 / DSM 28319 / BCRC 17069 / CCUG 31568 / BM 3577 / RP62A).